A 279-amino-acid polypeptide reads, in one-letter code: Movement protein (279 aa).

The protein belongs to the cucumovirus movement protein family.

It is found in the host cell junction. Its subcellular location is the host plasmodesma. In terms of biological role, transports viral genome to neighboring plant cells directly through plasmosdesmata, without any budding. The movement protein allows efficient cell to cell propagation, by bypassing the host cell wall barrier. Acts by forming a tubular structure at the host plasmodesmata, enlarging it enough to allow free passage of virion capsids. The polypeptide is Movement protein (Cucumber mosaic virus (strain M) (CMV)).